We begin with the raw amino-acid sequence, 288 residues long: ATP phosphoribosyltransferase (288 aa).

It belongs to the ATP phosphoribosyltransferase family. Long subfamily. The cofactor is Mg(2+).

The protein localises to the cytoplasm. It catalyses the reaction 1-(5-phospho-beta-D-ribosyl)-ATP + diphosphate = 5-phospho-alpha-D-ribose 1-diphosphate + ATP. It participates in amino-acid biosynthesis; L-histidine biosynthesis; L-histidine from 5-phospho-alpha-D-ribose 1-diphosphate: step 1/9. Its activity is regulated as follows. Feedback inhibited by histidine. Catalyzes the condensation of ATP and 5-phosphoribose 1-diphosphate to form N'-(5'-phosphoribosyl)-ATP (PR-ATP). Has a crucial role in the pathway because the rate of histidine biosynthesis seems to be controlled primarily by regulation of HisG enzymatic activity. The chain is ATP phosphoribosyltransferase (hisG) from Methanocaldococcus jannaschii (strain ATCC 43067 / DSM 2661 / JAL-1 / JCM 10045 / NBRC 100440) (Methanococcus jannaschii).